A 245-amino-acid polypeptide reads, in one-letter code: Balbiani ring A 28 kDa protein (245 aa).

An N-terminal signal peptide occupies residues 1 to 16 (MKSIIKHILFVVLLIS). Serine 33, serine 40, serine 92, serine 93, and serine 115 each carry phosphoserine.

As to expression, salivary gland.

It is found in the secreted. Used by the larvae to construct a supramolecular structure, the larval tube. The polypeptide is Balbiani ring A 28 kDa protein (Chironomus thummi thummi (Midge)).